A 473-amino-acid polypeptide reads, in one-letter code: Serine carboxypeptidase-like 25 (473 aa).

The first 22 residues, 1-22 (MAMAKLAIFTTLMAILVMTSQG), serve as a signal peptide directing secretion. N-linked (GlcNAc...) asparagine glycosylation is found at asparagine 46 and asparagine 143. Cystine bridges form between cysteine 92–cysteine 358, cysteine 252–cysteine 263, and cysteine 288–cysteine 326. Serine 185 is an active-site residue. Asparagine 289, asparagine 299, asparagine 347, and asparagine 367 each carry an N-linked (GlcNAc...) asparagine glycan. Catalysis depends on residues aspartate 395 and histidine 447.

It belongs to the peptidase S10 family. Ubiquitous.

It localises to the secreted. Functionally, probable carboxypeptidase. In Arabidopsis thaliana (Mouse-ear cress), this protein is Serine carboxypeptidase-like 25 (SCPL25).